Here is a 354-residue protein sequence, read N- to C-terminus: Protein Wnt-11 (354 aa).

The signal sequence occupies residues 1–24 (MRARPQVCEALLFALALHTGVCYG). N-linked (GlcNAc...) asparagine glycans are attached at residues Asn40 and Asn90. 3 disulfides stabilise this stretch: Cys80–Cys91, Cys130–Cys138, and Cys140–Cys157. Asn160 carries an N-linked (GlcNAc...) asparagine glycan. Disulfide bonds link Cys209–Cys223, Cys211–Cys218, Cys283–Cys314, Cys299–Cys309, Cys313–Cys353, Cys329–Cys344, Cys331–Cys341, and Cys336–Cys337. Ser215 carries O-palmitoleoyl serine; by PORCN lipidation. 2 N-linked (GlcNAc...) asparagine glycosylation sites follow: Asn300 and Asn304.

This sequence belongs to the Wnt family. Post-translationally, palmitoleoylation is required for efficient binding to frizzled receptors. Depalmitoleoylation leads to Wnt signaling pathway inhibition.

It localises to the secreted. It is found in the extracellular space. The protein localises to the extracellular matrix. Its function is as follows. Ligand for members of the frizzled family of seven transmembrane receptors. Probable developmental protein. May be a signaling molecule which affects the development of discrete regions of tissues. Is likely to signal over only few cell diameters. This is Protein Wnt-11 (Wnt11) from Mus musculus (Mouse).